Here is a 520-residue protein sequence, read N- to C-terminus: Probable bifunctional tRNA threonylcarbamoyladenosine biosynthesis protein (520 aa).

The tract at residues M1–W318 is kae1. 3 residues coordinate Fe cation: H105, H109, and Y126. L-threonylcarbamoyladenylate is bound by residues Y126 to A130, D158, G171, E175, and N251. Residue D279 participates in Fe cation binding. Positions R327–L520 constitute a Protein kinase domain. Residues S333–V341 and K350 each bind ATP. Catalysis depends on D437, which acts as the Proton acceptor; for kinase activity.

This sequence in the N-terminal section; belongs to the KAE1 / TsaD family. It in the C-terminal section; belongs to the protein kinase superfamily. Tyr protein kinase family. BUD32 subfamily. As to quaternary structure, component of the KEOPS complex that consists of Kae1, Bud32, Cgi121 and Pcc1; the whole complex dimerizes. The cofactor is Fe(2+).

Its subcellular location is the cytoplasm. It carries out the reaction L-seryl-[protein] + ATP = O-phospho-L-seryl-[protein] + ADP + H(+). The catalysed reaction is L-threonyl-[protein] + ATP = O-phospho-L-threonyl-[protein] + ADP + H(+). It catalyses the reaction L-threonylcarbamoyladenylate + adenosine(37) in tRNA = N(6)-L-threonylcarbamoyladenosine(37) in tRNA + AMP + H(+). Required for the formation of a threonylcarbamoyl group on adenosine at position 37 (t(6)A37) in tRNAs that read codons beginning with adenine. Is a component of the KEOPS complex that is probably involved in the transfer of the threonylcarbamoyl moiety of threonylcarbamoyl-AMP (TC-AMP) to the N6 group of A37. The Kae1 domain likely plays a direct catalytic role in this reaction. The Bud32 domain probably displays kinase activity that regulates Kae1 function. This is Probable bifunctional tRNA threonylcarbamoyladenosine biosynthesis protein from Methanospirillum hungatei JF-1 (strain ATCC 27890 / DSM 864 / NBRC 100397 / JF-1).